Reading from the N-terminus, the 237-residue chain is MATDWKQKCDSEWQLGAHGVPMPDTVDWKSVFETKPFERNLLQNPSPYGVNHTVPPPEPHRSGIPPPSDRPPQLEPEGNFSGWKTNTEVLPYDTSGIPPGVVICQLPQHRWFTLEQCVDLKAAGLWDQLLDDFQPEIVIEDWYEESQLHKCIYQLDVKLLGADGETVIKQHTYNPEEDLECYSHTWKKVSHVFSKYAPGVRYIHFLHRLKNQFMVEFFNTKVTDSSVIVKASKPSVK.

The region spanning 31-231 (VFETKPFERN…VTDSSVIVKA (201 aa)) is the FBA domain. The disordered stretch occupies residues 40–82 (NLLQNPSPYGVNHTVPPPEPHRSGIPPPSDRPPQLEPEGNFSG). Positions 64-74 (IPPPSDRPPQL) are enriched in pro residues.

Expressed in nonspecific cytotoxic cells (NCC).

Its subcellular location is the cytoplasm. Its function is as follows. May promote cell proliferation. This Danio rerio (Zebrafish) protein is F-box only protein 50 (nccrp1).